The chain runs to 906 residues: Protein translocase subunit SecA (906 aa).

Residues Gln-87, 105 to 109 (GEGKT), and Asp-512 each bind ATP. Positions 875 to 897 (VTFVRDEQKVGRNDPCPCGSGKK) are disordered. Zn(2+) is bound by residues Cys-890, Cys-892, Cys-901, and His-902.

It belongs to the SecA family. Monomer and homodimer. Part of the essential Sec protein translocation apparatus which comprises SecA, SecYEG and auxiliary proteins SecDF-YajC and YidC. The cofactor is Zn(2+).

The protein resides in the cell inner membrane. It localises to the cytoplasm. The catalysed reaction is ATP + H2O + cellular proteinSide 1 = ADP + phosphate + cellular proteinSide 2.. Functionally, part of the Sec protein translocase complex. Interacts with the SecYEG preprotein conducting channel. Has a central role in coupling the hydrolysis of ATP to the transfer of proteins into and across the cell membrane, serving both as a receptor for the preprotein-SecB complex and as an ATP-driven molecular motor driving the stepwise translocation of polypeptide chains across the membrane. This is Protein translocase subunit SecA from Aeromonas hydrophila subsp. hydrophila (strain ATCC 7966 / DSM 30187 / BCRC 13018 / CCUG 14551 / JCM 1027 / KCTC 2358 / NCIMB 9240 / NCTC 8049).